Reading from the N-terminus, the 123-residue chain is UPF0102 protein Pcar_2217 (123 aa).

It belongs to the UPF0102 family.

This chain is UPF0102 protein Pcar_2217, found in Syntrophotalea carbinolica (strain DSM 2380 / NBRC 103641 / GraBd1) (Pelobacter carbinolicus).